A 342-amino-acid polypeptide reads, in one-letter code: S-adenosylmethionine:tRNA ribosyltransferase-isomerase (342 aa).

Belongs to the QueA family. In terms of assembly, monomer.

Its subcellular location is the cytoplasm. It carries out the reaction 7-aminomethyl-7-carbaguanosine(34) in tRNA + S-adenosyl-L-methionine = epoxyqueuosine(34) in tRNA + adenine + L-methionine + 2 H(+). It functions in the pathway tRNA modification; tRNA-queuosine biosynthesis. Functionally, transfers and isomerizes the ribose moiety from AdoMet to the 7-aminomethyl group of 7-deazaguanine (preQ1-tRNA) to give epoxyqueuosine (oQ-tRNA). The protein is S-adenosylmethionine:tRNA ribosyltransferase-isomerase of Geobacillus sp. (strain WCH70).